The primary structure comprises 238 residues: Sugar fermentation stimulation protein homolog (238 aa).

Belongs to the SfsA family.

The sequence is that of Sugar fermentation stimulation protein homolog from Haemophilus influenzae (strain 86-028NP).